Here is a 471-residue protein sequence, read N- to C-terminus: 6-phosphofructo-2-kinase/fructose-2,6-bisphosphatase 1 (471 aa).

Position 2 is an N-acetylserine (serine 2). Positions 2–250 are 6-phosphofructo-2-kinase; that stretch reads SQEMGELTQT…VYYLMNIHVT (249 aa). Phosphoserine; by PKA is present on serine 33. 49–57 contacts ATP; it reads GLPARGKTY. Arginine 82 and arginine 105 together coordinate beta-D-fructose 6-phosphate. Residue aspartate 131 is part of the active site. Beta-D-fructose 6-phosphate-binding residues include threonine 133 and arginine 139. Position 141 is a phosphoserine (serine 141). The active site involves cysteine 161. 170–175 provides a ligand contact to ATP; the sequence is NIRQVK. Lysine 175, arginine 196, and tyrosine 200 together coordinate beta-D-fructose 6-phosphate. The segment at 251–471 is fructose-2,6-bisphosphatase; that stretch reads PRSIYLCRHG…EALDTVPAHY (221 aa). Arginine 258 serves as a coordination point for beta-D-fructose 2,6-bisphosphate. The Tele-phosphohistidine intermediate role is filled by histidine 259. Positions 265, 271, and 308 each coordinate beta-D-fructose 2,6-bisphosphate. The active-site Proton donor/acceptor is glutamate 328. Beta-D-fructose 2,6-bisphosphate-binding residues include tyrosine 339, arginine 353, lysine 357, tyrosine 368, glutamine 394, and arginine 398. 350-353 contributes to the ATP binding site; that stretch reads FALR. Residues 394–398 and tyrosine 430 contribute to the ATP site; that span reads QAVMR.

The protein in the C-terminal section; belongs to the phosphoglycerate mutase family. In terms of assembly, homodimer. As to expression, liver.

The enzyme catalyses beta-D-fructose 2,6-bisphosphate + H2O = beta-D-fructose 6-phosphate + phosphate. It catalyses the reaction beta-D-fructose 6-phosphate + ATP = beta-D-fructose 2,6-bisphosphate + ADP + H(+). Its activity is regulated as follows. Phosphorylation at Ser-33 inhibits the kinase and activates the bisphosphatase. Synthesis and degradation of fructose 2,6-bisphosphate. The chain is 6-phosphofructo-2-kinase/fructose-2,6-bisphosphatase 1 from Bos taurus (Bovine).